The primary structure comprises 429 residues: UPF0597 protein AHA_1619 (429 aa).

The protein belongs to the UPF0597 family.

The chain is UPF0597 protein AHA_1619 from Aeromonas hydrophila subsp. hydrophila (strain ATCC 7966 / DSM 30187 / BCRC 13018 / CCUG 14551 / JCM 1027 / KCTC 2358 / NCIMB 9240 / NCTC 8049).